A 725-amino-acid chain; its full sequence is MEALAKEIGIPEGEYREIVQRLGREPNRVELLLFKVMWSEHCAYKNSRPLLKALPKEGEAVLQGPGENAGVVRVGEGWAVAFKIESHNHPSAVEPFQGAATGVGGILRDIMSMGARPIALLDSLRFGPPEEARSRYLLKGVVSGIAFYGNAIGVPTVGGDLYFHEGYRENPLVNAMCLGLLREEHLKRSRASLGRPIYYAGAKTGRDGIGGAAFASRELKEEKAEDRPAVQVGDPFLGKLLMEATLEAIELDLVEGVQDMGAAGLTSSLSELAHKSGLGVELHLDLVPTREEGMTPEELLLSESQERMVLVPKEGKEKALEEVFGRWGLDCVPVARTIPERVFRVLFRGEVVAEVPTEALAEAPTYVRVGREDPEVRRLRETPIPPLEADPQEVLRRLLASPNLASREAVYERYDHQVGTRTALLPGKGDAAVLWIKGTRLGVAAKVDQNPRYSRLHPRLGAMHALAEACRNVSVVGAKPLAYTDGLNLGSPETPEGYHELAETIAGLKEASEALGVPVVSGNVSLYNESGGKRIPPTAMVGVVGVLEVDKRAEMGFRRPGEVLLLIGEERGELGASEVLYLLTGKEFGHPPRLDLGREKAVQEAIRDLIQRGLTRTAHDVAEGGLLLALAEMTFPYGVGATVEVREEGLEALFGEAPSRVLFTVEKTRLQEATLLLEERGLPYRVLGETGGKSLTVLTPGGVLEWSLEELLSAWKAPLREVLDG.

Residue His41 is part of the active site. 2 residues coordinate ATP: Tyr44 and Lys83. Glu85 serves as a coordination point for Mg(2+). Substrate is bound by residues Ser86 to His89 and Arg108. The active-site Proton acceptor is His87. Asp109 is a binding site for Mg(2+). Residue Gln231 coordinates substrate. Position 259 (Asp259) interacts with Mg(2+). Glu303–Gln305 is a substrate binding site. Residues Asp485 and Gly522 each contribute to the ATP site. A Mg(2+)-binding site is contributed by Asn523. Ser525 is a binding site for substrate.

Belongs to the FGAMS family. As to quaternary structure, monomer. Part of the FGAM synthase complex composed of 1 PurL, 1 PurQ and 2 PurS subunits.

It localises to the cytoplasm. It carries out the reaction N(2)-formyl-N(1)-(5-phospho-beta-D-ribosyl)glycinamide + L-glutamine + ATP + H2O = 2-formamido-N(1)-(5-O-phospho-beta-D-ribosyl)acetamidine + L-glutamate + ADP + phosphate + H(+). It participates in purine metabolism; IMP biosynthesis via de novo pathway; 5-amino-1-(5-phospho-D-ribosyl)imidazole from N(2)-formyl-N(1)-(5-phospho-D-ribosyl)glycinamide: step 1/2. In terms of biological role, part of the phosphoribosylformylglycinamidine synthase complex involved in the purines biosynthetic pathway. Catalyzes the ATP-dependent conversion of formylglycinamide ribonucleotide (FGAR) and glutamine to yield formylglycinamidine ribonucleotide (FGAM) and glutamate. The FGAM synthase complex is composed of three subunits. PurQ produces an ammonia molecule by converting glutamine to glutamate. PurL transfers the ammonia molecule to FGAR to form FGAM in an ATP-dependent manner. PurS interacts with PurQ and PurL and is thought to assist in the transfer of the ammonia molecule from PurQ to PurL. In Thermus thermophilus (strain ATCC BAA-163 / DSM 7039 / HB27), this protein is Phosphoribosylformylglycinamidine synthase subunit PurL.